The chain runs to 422 residues: Interferon-induced protein 44 (422 aa).

In terms of domain architecture, TLDc spans Met-1–Glu-147.

The protein belongs to the IFI44 family.

It is found in the cytoplasm. This protein aggregates to form microtubular structures. The sequence is that of Interferon-induced protein 44 (Ifi44) from Mus musculus (Mouse).